The following is a 453-amino-acid chain: Tubulin alpha-1 chain (453 aa).

7 residues coordinate GTP: Gln11, Glu71, Gly144, Thr145, Thr179, Asn206, and Asn228. A Mg(2+)-binding site is contributed by Glu71. Glu254 is an active-site residue. The tract at residues Glu433–Tyr453 is disordered.

This sequence belongs to the tubulin family. Dimer of alpha and beta chains. A typical microtubule is a hollow water-filled tube with an outer diameter of 25 nm and an inner diameter of 15 nM. Alpha-beta heterodimers associate head-to-tail to form protofilaments running lengthwise along the microtubule wall with the beta-tubulin subunit facing the microtubule plus end conferring a structural polarity. Microtubules usually have 13 protofilaments but different protofilament numbers can be found in some organisms and specialized cells. Requires Mg(2+) as cofactor. Undergoes a tyrosination/detyrosination cycle, the cyclic removal and re-addition of a C-terminal tyrosine residue by the enzymes tubulin tyrosine carboxypeptidase (TTCP) and tubulin tyrosine ligase (TTL), respectively.

The protein localises to the cytoplasm. It is found in the cytoskeleton. It catalyses the reaction GTP + H2O = GDP + phosphate + H(+). In terms of biological role, tubulin is the major constituent of microtubules, a cylinder consisting of laterally associated linear protofilaments composed of alpha- and beta-tubulin heterodimers. Microtubules grow by the addition of GTP-tubulin dimers to the microtubule end, where a stabilizing cap forms. Below the cap, tubulin dimers are in GDP-bound state, owing to GTPase activity of alpha-tubulin. This is Tubulin alpha-1 chain (TUBA1) from Pelvetia fastigiata (Brown alga).